The chain runs to 429 residues: Ribosomal RNA small subunit methyltransferase B (429 aa).

S-adenosyl-L-methionine is bound by residues 254–260 (CAAPGGK), D277, D303, and D322. The active-site Nucleophile is the C375.

The protein belongs to the class I-like SAM-binding methyltransferase superfamily. RsmB/NOP family.

The protein localises to the cytoplasm. It carries out the reaction cytidine(967) in 16S rRNA + S-adenosyl-L-methionine = 5-methylcytidine(967) in 16S rRNA + S-adenosyl-L-homocysteine + H(+). Functionally, specifically methylates the cytosine at position 967 (m5C967) of 16S rRNA. This is Ribosomal RNA small subunit methyltransferase B from Shigella boydii serotype 18 (strain CDC 3083-94 / BS512).